The primary structure comprises 366 residues: Aminomethyltransferase (366 aa).

It belongs to the GcvT family. The glycine cleavage system is composed of four proteins: P, T, L and H.

It catalyses the reaction N(6)-[(R)-S(8)-aminomethyldihydrolipoyl]-L-lysyl-[protein] + (6S)-5,6,7,8-tetrahydrofolate = N(6)-[(R)-dihydrolipoyl]-L-lysyl-[protein] + (6R)-5,10-methylene-5,6,7,8-tetrahydrofolate + NH4(+). Its function is as follows. The glycine cleavage system catalyzes the degradation of glycine. This is Aminomethyltransferase from Bacillus cereus (strain ZK / E33L).